The sequence spans 176 residues: ATP-dependent protease subunit HslV (176 aa).

Residue Thr-5 is part of the active site. 3 residues coordinate Na(+): Ser-161, Cys-164, and Thr-167.

The protein belongs to the peptidase T1B family. HslV subfamily. A double ring-shaped homohexamer of HslV is capped on each side by a ring-shaped HslU homohexamer. The assembly of the HslU/HslV complex is dependent on binding of ATP.

It is found in the cytoplasm. The enzyme catalyses ATP-dependent cleavage of peptide bonds with broad specificity.. Allosterically activated by HslU binding. Its function is as follows. Protease subunit of a proteasome-like degradation complex believed to be a general protein degrading machinery. This is ATP-dependent protease subunit HslV from Thermoanaerobacter sp. (strain X514).